The primary structure comprises 466 residues: Uronate isomerase (466 aa).

It belongs to the metallo-dependent hydrolases superfamily. Uronate isomerase family.

It catalyses the reaction D-glucuronate = D-fructuronate. The enzyme catalyses aldehydo-D-galacturonate = keto-D-tagaturonate. It participates in carbohydrate metabolism; pentose and glucuronate interconversion. The protein is Uronate isomerase of Clostridium perfringens (strain 13 / Type A).